The following is a 181-amino-acid chain: Translation initiation factor IF-3 (181 aa).

Belongs to the IF-3 family. Monomer.

The protein resides in the cytoplasm. In terms of biological role, IF-3 binds to the 30S ribosomal subunit and shifts the equilibrium between 70S ribosomes and their 50S and 30S subunits in favor of the free subunits, thus enhancing the availability of 30S subunits on which protein synthesis initiation begins. This Cereibacter sphaeroides (strain ATCC 17023 / DSM 158 / JCM 6121 / CCUG 31486 / LMG 2827 / NBRC 12203 / NCIMB 8253 / ATH 2.4.1.) (Rhodobacter sphaeroides) protein is Translation initiation factor IF-3.